A 473-amino-acid polypeptide reads, in one-letter code: Maltose fermentation regulatory protein MAL63 (473 aa).

Residues 8-34 constitute a DNA-binding region (zn(2)-C6 fungal-type); sequence CDCCRVRRVKCDRNKPCNRCIQRNLNC. The Nuclear localization signal motif lies at 41–49; sequence KKRGPKSIR.

Belongs to the MAL13 family.

It localises to the nucleus. Functionally, regulates the coordinate transcription of structural MAL6S (maltase) and MAL6T (maltose permease) genes. The polypeptide is Maltose fermentation regulatory protein MAL63 (MAL63) (Saccharomyces cerevisiae (Baker's yeast)).